A 371-amino-acid chain; its full sequence is MRKTLFSGVALAAVIAFGGSAWADVLVGIGIPVTGPNAVYGAQIQKGAEAAIKEVNDAGGINGEKIAITIGDDVSDPKQGISVANKFAADGVKFVIGHFNSGVTIPASQVYAENGILEISPGATNPQYTEQGLWNTFRTCGRDDQQGTVAGQYIFDHFKDAKIAVIHDKTPYGQGLADETKKKLNELGTKETLYEGVNVGEKDFSALIAKLKQAGVNVVYWGGLHPEAGLIIRQMADQGLKAQFISGDGIVSNELASIAGPAVEGTLNTFGPDPRNNPDNAELVKKFRDAGFEPEAYTLYSYAAVQSLAQAAKAAGSNDPQEVAKAMKEKGPFKTVLGDLSYDEKGDPKLPGYVMYKWEKGADGKYNYIQQ.

A signal peptide spans 1–23 (MRKTLFSGVALAAVIAFGGSAWA).

Belongs to the leucine-binding protein family.

Component of an amino-acid transport system. This chain is Leu/Ile/Val-binding protein homolog 1, found in Brucella suis biovar 1 (strain 1330).